The sequence spans 46 residues: Cytochrome b559 subunit beta (46 aa).

Residues 21–37 traverse the membrane as a helical segment; the sequence is WLALHTLGIPTVFFLGA. His25 is a heme binding site.

Belongs to the PsbE/PsbF family. As to quaternary structure, heterodimer of an alpha subunit and a beta subunit. PSII is composed of 1 copy each of membrane proteins PsbA, PsbB, PsbC, PsbD, PsbE, PsbF, PsbH, PsbI, PsbJ, PsbK, PsbL, PsbM, PsbT, PsbX, PsbY, PsbZ, Psb30/Ycf12, peripheral proteins PsbO, CyanoQ (PsbQ), PsbU, PsbV and a large number of cofactors. It forms dimeric complexes. Requires heme b as cofactor.

The protein localises to the cellular thylakoid membrane. In terms of biological role, this b-type cytochrome is tightly associated with the reaction center of photosystem II (PSII). PSII is a light-driven water:plastoquinone oxidoreductase that uses light energy to abstract electrons from H(2)O, generating O(2) and a proton gradient subsequently used for ATP formation. It consists of a core antenna complex that captures photons, and an electron transfer chain that converts photonic excitation into a charge separation. The chain is Cytochrome b559 subunit beta from Synechococcus sp. (strain CC9605).